Reading from the N-terminus, the 448-residue chain is Ribulose bisphosphate carboxylase large chain (448 aa).

K4 bears the N6,N6,N6-trimethyllysine mark. Substrate-binding residues include N113 and T163. K165 (proton acceptor) is an active-site residue. K167 is a substrate binding site. 3 residues coordinate Mg(2+): K191, D193, and E194. The residue at position 191 (K191) is an N6-carboxylysine. The Proton acceptor role is filled by H284. Residues R285, H317, and S369 each coordinate substrate.

This sequence belongs to the RuBisCO large chain family. Type I subfamily. In terms of assembly, heterohexadecamer of 8 large chains and 8 small chains; disulfide-linked. The disulfide link is formed within the large subunit homodimers. It depends on Mg(2+) as a cofactor. In terms of processing, the disulfide bond which can form in the large chain dimeric partners within the hexadecamer appears to be associated with oxidative stress and protein turnover.

The protein resides in the plastid. It is found in the chloroplast. It carries out the reaction 2 (2R)-3-phosphoglycerate + 2 H(+) = D-ribulose 1,5-bisphosphate + CO2 + H2O. The catalysed reaction is D-ribulose 1,5-bisphosphate + O2 = 2-phosphoglycolate + (2R)-3-phosphoglycerate + 2 H(+). In terms of biological role, ruBisCO catalyzes two reactions: the carboxylation of D-ribulose 1,5-bisphosphate, the primary event in carbon dioxide fixation, as well as the oxidative fragmentation of the pentose substrate in the photorespiration process. Both reactions occur simultaneously and in competition at the same active site. This Eucryphia lucida (Leatherwood) protein is Ribulose bisphosphate carboxylase large chain.